The sequence spans 122 residues: MIQPQTHLNVADNSGARELMCIRIIGASNRRYAHIGDVIVAVIKEAVPNMPLERSEVVRAVIVRTCKELKRDNGMIIRYDDNAAVVIDQEGNPKGTRIFGAIARELRQLNFTKIVSLAPEVL.

Belongs to the universal ribosomal protein uL14 family. Part of the 50S ribosomal subunit.

The protein resides in the plastid. The protein localises to the chloroplast. Its function is as follows. Binds to 23S rRNA. The polypeptide is Large ribosomal subunit protein uL14c (Coffea arabica (Arabian coffee)).